The chain runs to 348 residues: Holliday junction branch migration complex subunit RuvB (348 aa).

The large ATPase domain (RuvB-L) stretch occupies residues 4-186; the sequence is TDRIISANTA…FGIIQRLEFY (183 aa). ATP contacts are provided by residues isoleucine 25, arginine 26, glycine 67, lysine 70, threonine 71, threonine 72, 133–135, arginine 176, tyrosine 186, and arginine 223; that span reads EDY. Threonine 71 provides a ligand contact to Mg(2+). Residues 187 to 257 are small ATPAse domain (RuvB-S); that stretch reads SIDDLSKIVY…IADKALSMLK (71 aa). Residues 260–348 form a head domain (RuvB-H) region; the sequence is PVGFDHMDHR…SADQQQTLSI (89 aa). Positions 315 and 320 each coordinate DNA.

The protein belongs to the RuvB family. Homohexamer. Forms an RuvA(8)-RuvB(12)-Holliday junction (HJ) complex. HJ DNA is sandwiched between 2 RuvA tetramers; dsDNA enters through RuvA and exits via RuvB. An RuvB hexamer assembles on each DNA strand where it exits the tetramer. Each RuvB hexamer is contacted by two RuvA subunits (via domain III) on 2 adjacent RuvB subunits; this complex drives branch migration. In the full resolvosome a probable DNA-RuvA(4)-RuvB(12)-RuvC(2) complex forms which resolves the HJ.

Its subcellular location is the cytoplasm. The catalysed reaction is ATP + H2O = ADP + phosphate + H(+). In terms of biological role, the RuvA-RuvB-RuvC complex processes Holliday junction (HJ) DNA during genetic recombination and DNA repair, while the RuvA-RuvB complex plays an important role in the rescue of blocked DNA replication forks via replication fork reversal (RFR). RuvA specifically binds to HJ cruciform DNA, conferring on it an open structure. The RuvB hexamer acts as an ATP-dependent pump, pulling dsDNA into and through the RuvAB complex. RuvB forms 2 homohexamers on either side of HJ DNA bound by 1 or 2 RuvA tetramers; 4 subunits per hexamer contact DNA at a time. Coordinated motions by a converter formed by DNA-disengaged RuvB subunits stimulates ATP hydrolysis and nucleotide exchange. Immobilization of the converter enables RuvB to convert the ATP-contained energy into a lever motion, pulling 2 nucleotides of DNA out of the RuvA tetramer per ATP hydrolyzed, thus driving DNA branch migration. The RuvB motors rotate together with the DNA substrate, which together with the progressing nucleotide cycle form the mechanistic basis for DNA recombination by continuous HJ branch migration. Branch migration allows RuvC to scan DNA until it finds its consensus sequence, where it cleaves and resolves cruciform DNA. The polypeptide is Holliday junction branch migration complex subunit RuvB (Francisella tularensis subsp. tularensis (strain FSC 198)).